The following is a 249-amino-acid chain: ATP synthase subunit a, chloroplastic (249 aa).

The next 5 helical transmembrane spans lie at glutamine 40–valine 60, valine 97–leucine 117, isoleucine 136–serine 156, leucine 201–leucine 221, and glycine 222–glycine 242.

Belongs to the ATPase A chain family. As to quaternary structure, F-type ATPases have 2 components, CF(1) - the catalytic core - and CF(0) - the membrane proton channel. CF(1) has five subunits: alpha(3), beta(3), gamma(1), delta(1), epsilon(1). CF(0) has four main subunits: a, b, b' and c.

It localises to the plastid. It is found in the chloroplast thylakoid membrane. Functionally, key component of the proton channel; it plays a direct role in the translocation of protons across the membrane. The chain is ATP synthase subunit a, chloroplastic from Manihot esculenta (Cassava).